Consider the following 574-residue polypeptide: Squalene monooxygenase (574 aa).

At 1 to 20 (MWTFLGIATFTYFYKKFGDF) the chain is on the cytoplasmic side. The interaction with MARCHF6 stretch occupies residues 1–100 (MWTFLGIATF…EQLEARRRRK (100 aa)). The stretch at 21 to 41 (ITLANREVLLCVLVFLSLGLV) is an intramembrane region. Topologically, residues 42–574 (LSYRCRHRNG…IYSEMKYMVH (533 aa)) are cytoplasmic. Residues 62–73 (QFALFSDILSGL) form a required for degradation in response to high membrane cholesterol levels region. The interval 118 to 574 (TSSQNDPEVI…IYSEMKYMVH (457 aa)) is sufficient for enzyme activity. FAD contacts are provided by residues 133–134 (VL), 153–154 (ER), Arg161, Phe166, Arg234, Val250, Asp408, and Met421. The segment at 516–574 (PLVLIGHFFAVAIYAVYFCFKSEPWITKPRALLSSGAVLYKACSVIFPLIYSEMKYMVH) is hydrophobic; mediates interaction with membranes.

Belongs to the squalene monooxygenase family. Interacts (via N-terminal domain) with MARCHF6. Interacts with SMIM22; this interaction modulates lipid droplet formation. FAD is required as a cofactor. Post-translationally, ubiquitinated by MARCHF6 in response to high cholesterol levels in intracellular membranes, leading to proteasomal degradation. Detected in liver (at protein level).

It is found in the microsome membrane. It localises to the endoplasmic reticulum membrane. It carries out the reaction squalene + reduced [NADPH--hemoprotein reductase] + O2 = (S)-2,3-epoxysqualene + oxidized [NADPH--hemoprotein reductase] + H2O + H(+). It participates in terpene metabolism; lanosterol biosynthesis; lanosterol from farnesyl diphosphate: step 2/3. With respect to regulation, inhibited by NB-598 ((E)N-ethyl-N-(6,6-dimethyl-2-hepten-4-ynyl)-3-[(3,3'-bi-thiophen-5-yl)methoxy]benzene-methanamine). Contrary to fungal enzymes, the mammalian enzyme is only slightly inhibited by terbinafine. Inhibited by tellurite, tellurium dioxide, selenite, and selenium dioxide. In terms of biological role, catalyzes the stereospecific oxidation of squalene to (S)-2,3-epoxysqualene, and is considered to be a rate-limiting enzyme in steroid biosynthesis. This Homo sapiens (Human) protein is Squalene monooxygenase (SQLE).